Consider the following 368-residue polypeptide: MSGSIAPSSPGLTLPVWVAAAAKAALQVLLDEPFNAEQQLNQGSDRPSLQVPVCSAAPLSDGQALGISRCDPGPGLDLTRDLEVWVRVAWIATPQPVLELQPGEGVGRLGPEGDICLSGFARELLERNLLPLLPAGRGLMVQPILPRGRSLAQRTSNAAFGVVDGLALIGTQAEVQRSAAPDQLQEVLAELEARAADPAFQGRLVLVIGENGLDLARQQGLGPVLKVGNWVGPVLVAAAEAGVRDLLLLGYHGKLIKLAGGIFHTHHHLADGRLEVLVALGLDAGLSTAELLQCRGAASVEEAFQALDPDQARALGQHLAAIVEQRSHSYLARYGAWSMRIGAALFDRSRTLRWWGPEAEKRFFTLRD.

Belongs to the CbiD family.

The catalysed reaction is Co-precorrin-5B + S-adenosyl-L-methionine = Co-precorrin-6A + S-adenosyl-L-homocysteine. The protein operates within cofactor biosynthesis; adenosylcobalamin biosynthesis; cob(II)yrinate a,c-diamide from sirohydrochlorin (anaerobic route): step 6/10. Catalyzes the methylation of C-1 in cobalt-precorrin-5B to form cobalt-precorrin-6A. The chain is Cobalt-precorrin-5B C(1)-methyltransferase from Synechococcus sp. (strain CC9605).